The primary structure comprises 2282 residues: Protein Ycf2 (2282 aa).

1637 to 1644 (GSIGTGRS) is an ATP binding site.

The protein belongs to the Ycf2 family.

The protein localises to the plastid. The protein resides in the chloroplast stroma. Its function is as follows. Probable ATPase of unknown function. Its presence in a non-photosynthetic plant (Epifagus virginiana) and experiments in tobacco indicate that it has an essential function which is probably not related to photosynthesis. This chain is Protein Ycf2, found in Citrus sinensis (Sweet orange).